A 423-amino-acid polypeptide reads, in one-letter code: Glycine amidinotransferase, mitochondrial (423 aa).

Residues 1 to 43 (MLRVRCLRGGSRGAEAVHYIGSRLGRTLTGWVQRTFQSTQAAT) constitute a mitochondrion transit peptide. A phosphoserine mark is found at Ser46 and Ser49. Residue Asp170 participates in arginine binding. Residues Asp254 and His303 contribute to the active site. 4 residues coordinate arginine: Asp305, Arg322, Ser354, and Ser355. Lys385 is modified (N6-acetyllysine). Cys407 serves as the catalytic Amidino-cysteine intermediate.

This sequence belongs to the amidinotransferase family. As to quaternary structure, homodimer. There is an equilibrium between the monomeric and dimeric forms, shifted towards the side of the monomer. As to expression, expressed in brain, heart, kidney, liver, lung, salivary gland and skeletal muscle tissue, with the highest expression in kidney. Biallelically expressed in placenta and fetal tissues.

The protein resides in the mitochondrion inner membrane. Its subcellular location is the cytoplasm. It carries out the reaction L-arginine + glycine = guanidinoacetate + L-ornithine. It catalyses the reaction 4-aminobutanoate + L-arginine = 4-guanidinobutanoate + L-ornithine. The catalysed reaction is beta-alanine + L-arginine = 3-guanidinopropanoate + L-ornithine. The enzyme catalyses taurine + L-arginine = taurocyamine + L-ornithine. It functions in the pathway amine and polyamine biosynthesis; creatine biosynthesis; creatine from L-arginine and glycine: step 1/2. Transamidinase that catalyzes the transfer of the amidino group of L-arginine onto the amino moiety of acceptor metabolites such as glycine, beta-alanine, gamma-aminobutyric acid (GABA) and taurine yielding the corresponding guanidine derivatives. Catalyzes the rate-limiting step of creatine biosynthesis, namely the transfer of the amidino group from L-arginine to glycine to generate guanidinoacetate, which is then methylated by GAMT to form creatine. Provides creatine as a source for ATP generation in tissues with high energy demands, in particular skeletal muscle, heart and brain. The chain is Glycine amidinotransferase, mitochondrial (GATM) from Homo sapiens (Human).